Reading from the N-terminus, the 263-residue chain is Probable septum site-determining protein MinC (263 aa).

The disordered stretch occupies residues 107–159; the sequence is LPPSGARERPLDIKDSAPRKPAEEPSPSAGEARPEPAKAEEKPAEPVSRPTKV. Composition is skewed to basic and acidic residues over residues 112-129 and 138-150; these read ARER…KPAE and ARPE…EKPA.

The protein belongs to the MinC family. Interacts with MinD and FtsZ.

In terms of biological role, cell division inhibitor that blocks the formation of polar Z ring septums. Rapidly oscillates between the poles of the cell to destabilize FtsZ filaments that have formed before they mature into polar Z rings. Prevents FtsZ polymerization. This Pseudomonas aeruginosa (strain LESB58) protein is Probable septum site-determining protein MinC.